Consider the following 241-residue polypeptide: MRKPIAAANWKMNGDFSLLDDFAQANITSDKCETIFALPSVLLDRAQKLGLNALAGQDVSAQVKGAFTGEISASMLKMLGCQYCIIGHSERRQYHHEDEALLIEKWRRLKEAEITPIYCIGELQAEYDAHATQQALERQLRPILEENLVDHKTIIAYEPVWAIGTGKAATPDYAQHVHQMIRQIVAQNYASIAPAMRLLYGGSVKPDNAGLLICQADIDGFLIGGASLDVGLFTKIIETMK.

Substrate is bound at residue 9–11 (NWK). Catalysis depends on His88, which acts as the Electrophile. Residue Glu158 is the Proton acceptor of the active site. Residues Gly164, Ser203, and 224–225 (GG) contribute to the substrate site.

The protein belongs to the triosephosphate isomerase family. In terms of assembly, homodimer.

Its subcellular location is the cytoplasm. The enzyme catalyses D-glyceraldehyde 3-phosphate = dihydroxyacetone phosphate. It functions in the pathway carbohydrate biosynthesis; gluconeogenesis. The protein operates within carbohydrate degradation; glycolysis; D-glyceraldehyde 3-phosphate from glycerone phosphate: step 1/1. Its function is as follows. Involved in the gluconeogenesis. Catalyzes stereospecifically the conversion of dihydroxyacetone phosphate (DHAP) to D-glyceraldehyde-3-phosphate (G3P). The protein is Triosephosphate isomerase of Dichelobacter nodosus (strain VCS1703A).